The chain runs to 254 residues: Probable transcriptional regulatory protein Cyan7425_4347 (254 aa).

The protein belongs to the TACO1 family.

It is found in the cytoplasm. This chain is Probable transcriptional regulatory protein Cyan7425_4347, found in Cyanothece sp. (strain PCC 7425 / ATCC 29141).